Consider the following 274-residue polypeptide: Cytochrome b-c1 complex subunit Rieske, mitochondrial (274 aa).

Residues 79–103 are Mitochondrial matrix-facing; it reads SHTDVKVPDFYDYRRLEVLDSTKSS. The helical transmembrane segment at 104–140 threads the bilayer; that stretch reads RESSEARKGFSYLVTAVTTVGVAYAAKNAVTQFISSM. The Mitochondrial intermembrane portion of the chain corresponds to 141 to 274; sequence SASADVLAMA…FTSDDMVVVG (134 aa). Residues 187–272 form the Rieske domain; the sequence is EAAVELSQLR…YEFTSDDMVV (86 aa). [2Fe-2S] cluster-binding residues include cysteine 217, histidine 219, cysteine 236, histidine 239, and serine 241. A disulfide bond links cysteine 222 and cysteine 238.

The protein belongs to the Rieske iron-sulfur protein family. As to quaternary structure, component of the ubiquinol-cytochrome c oxidoreductase (cytochrome b-c1 complex, complex III, CIII), a multisubunit enzyme composed of 11 subunits. The complex is composed of 3 respiratory subunits cytochrome b, cytochrome c1 and Rieske protein UQCRFS1, 2 core protein subunits UQCRC1/QCR1 and UQCRC2/QCR2, and 6 low-molecular weight protein subunits UQCRH/QCR6, UQCRB/QCR7, UQCRQ/QCR8, UQCR10/QCR9, UQCR11/QCR10 and subunit 9, the cleavage product of Rieske protein UQCRFS1. The complex exists as an obligatory dimer and forms supercomplexes (SCs) in the inner mitochondrial membrane with NADH-ubiquinone oxidoreductase (complex I, CI) and cytochrome c oxidase (complex IV, CIV), resulting in different assemblies (supercomplex SCI(1)III(2)IV(1) and megacomplex MCI(2)III(2)IV(2)). Incorporation of the Rieske protein UQCRFS1 is the penultimate step in complex III assembly. Interacts with TTC19, which is involved in the clearance of UQCRFS1 fragments. Component of the ubiquinol-cytochrome c oxidoreductase (cytochrome b-c1 complex, complex III, CIII). Subunit 9 corresponds to the mitochondrial targeting sequence (MTS) of Rieske protein UQCRFS1. It is retained after processing and incorporated inside complex III, where it remains bound to the complex and localizes between the 2 core subunits UQCRC1/QCR1 and UQCRC2/QCR2. Requires [2Fe-2S] cluster as cofactor. In terms of processing, proteolytic processing is necessary for the correct insertion of UQCRFS1 in the complex III dimer. Several fragments are generated during UQCRFS1 insertion, most probably due to the endogenous matrix-processing peptidase (MPP) activity of the 2 core protein subunits UQCRC1/QCR1 and UQCRC2/QCR2, which are homologous to the 2 mitochondrial-processing peptidase (MPP) subunits beta-MPP and alpha-MPP respectively. The action of the protease is also necessary for the clearance of the UQCRFS1 fragments.

It localises to the mitochondrion inner membrane. The catalysed reaction is a quinol + 2 Fe(III)-[cytochrome c](out) = a quinone + 2 Fe(II)-[cytochrome c](out) + 2 H(+)(out). Its function is as follows. Component of the ubiquinol-cytochrome c oxidoreductase, a multisubunit transmembrane complex that is part of the mitochondrial electron transport chain which drives oxidative phosphorylation. The respiratory chain contains 3 multisubunit complexes succinate dehydrogenase (complex II, CII), ubiquinol-cytochrome c oxidoreductase (cytochrome b-c1 complex, complex III, CIII) and cytochrome c oxidase (complex IV, CIV), that cooperate to transfer electrons derived from NADH and succinate to molecular oxygen, creating an electrochemical gradient over the inner membrane that drives transmembrane transport and the ATP synthase. The cytochrome b-c1 complex catalyzes electron transfer from ubiquinol to cytochrome c, linking this redox reaction to translocation of protons across the mitochondrial inner membrane, with protons being carried across the membrane as hydrogens on the quinol. In the process called Q cycle, 2 protons are consumed from the matrix, 4 protons are released into the intermembrane space and 2 electrons are passed to cytochrome c. The Rieske protein is a catalytic core subunit containing a [2Fe-2S] iron-sulfur cluster. It cycles between 2 conformational states during catalysis to transfer electrons from the quinol bound in the Q(0) site in cytochrome b to cytochrome c1. Incorporation of UQCRFS1 is the penultimate step in complex III assembly. In terms of biological role, component of the ubiquinol-cytochrome c oxidoreductase (cytochrome b-c1 complex, complex III, CIII). UQCRFS1 undergoes proteolytic processing once it is incorporated in the complex III dimer. One of the fragments, called subunit 9, corresponds to its mitochondrial targeting sequence (MTS). The proteolytic processing is necessary for the correct insertion of UQCRFS1 in the complex III dimer, but the persistence of UQCRFS1-derived fragments may prevent newly imported UQCRFS1 to be processed and assembled into complex III and is detrimental for the complex III structure and function. The chain is Cytochrome b-c1 complex subunit Rieske, mitochondrial (UQCRFS1) from Theropithecus gelada (Gelada baboon).